The following is a 158-amino-acid chain: Endoribonuclease YbeY (158 aa).

Zn(2+) contacts are provided by H119, H123, and D129.

It belongs to the endoribonuclease YbeY family. The cofactor is Zn(2+).

Its subcellular location is the cytoplasm. In terms of biological role, single strand-specific metallo-endoribonuclease involved in late-stage 70S ribosome quality control and in maturation of the 3' terminus of the 16S rRNA. In Chlamydia pneumoniae (Chlamydophila pneumoniae), this protein is Endoribonuclease YbeY.